A 229-amino-acid polypeptide reads, in one-letter code: 3-isopropylmalate dehydratase small subunit (229 aa).

Positions 198 to 229 are disordered; that stretch reads LPVKREPEQPIESAREGEYPDWQGPLADRGII. The segment covering 200 to 215 has biased composition (basic and acidic residues); the sequence is VKREPEQPIESAREGE.

The protein belongs to the LeuD family. LeuD type 1 subfamily. As to quaternary structure, heterodimer of LeuC and LeuD.

It catalyses the reaction (2R,3S)-3-isopropylmalate = (2S)-2-isopropylmalate. It functions in the pathway amino-acid biosynthesis; L-leucine biosynthesis; L-leucine from 3-methyl-2-oxobutanoate: step 2/4. In terms of biological role, catalyzes the isomerization between 2-isopropylmalate and 3-isopropylmalate, via the formation of 2-isopropylmaleate. The polypeptide is 3-isopropylmalate dehydratase small subunit (Bifidobacterium adolescentis (strain ATCC 15703 / DSM 20083 / NCTC 11814 / E194a)).